Reading from the N-terminus, the 338-residue chain is UDP-N-acetylenolpyruvoylglucosamine reductase (338 aa).

In terms of domain architecture, FAD-binding PCMH-type spans 17–188 (IAARTDWWID…MYVDYRLRLR (172 aa)). Arg164 is a catalytic residue. Catalysis depends on Ser237, which acts as the Proton donor. Residue Glu333 is part of the active site.

It belongs to the MurB family. The cofactor is FAD.

The protein resides in the cytoplasm. It catalyses the reaction UDP-N-acetyl-alpha-D-muramate + NADP(+) = UDP-N-acetyl-3-O-(1-carboxyvinyl)-alpha-D-glucosamine + NADPH + H(+). Its pathway is cell wall biogenesis; peptidoglycan biosynthesis. Functionally, cell wall formation. The polypeptide is UDP-N-acetylenolpyruvoylglucosamine reductase (Porphyromonas gingivalis (strain ATCC 33277 / DSM 20709 / CIP 103683 / JCM 12257 / NCTC 11834 / 2561)).